The chain runs to 238 residues: Survival of motor neuron-related-splicing factor 30 (238 aa).

One can recognise a Tudor domain in the interval 72-132; sequence SWKVGDKCMA…KPVEEGRKAK (61 aa). Residues 142 to 160 carry the Nuclear localization signal motif; sequence KKEMIAQQREYKKKKALKK. Position 201 is a phosphoserine (S201). N6-acetyllysine is present on K219.

It belongs to the SMN family. In terms of assembly, associates with spliceosomes. Associates with U4/U5/U6 tri-snRNP and with U2 snRNP. Interacts (via Tudor domain) with SNRPD3 (via C-terminus); the interaction is direct. Detected at intermediate levels in skeletal muscle, and at low levels in heart and pancreas.

The protein localises to the nucleus speckle. Its subcellular location is the nucleus. It localises to the cajal body. Involved in spliceosome assembly. The protein is Survival of motor neuron-related-splicing factor 30 (SMNDC1) of Homo sapiens (Human).